A 798-amino-acid polypeptide reads, in one-letter code: ATP-dependent RNA helicase bel (798 aa).

Residues 16–248 form a disordered region; the sequence is VAGLDLNGGS…SRWKEGGGSN (233 aa). Polar residues predominate over residues 31-42; that stretch reads PITSKTSTNSVT. Gly residues-rich tracts occupy residues 94–110, 118–132, and 154–178; these read RGGG…GGRG, YGYG…GGGG, and SGGG…GGSG. 2 positions are modified to phosphoserine: serine 177 and serine 179. Residues 198–209 show a composition bias toward basic and acidic residues; sequence RNDRWQEPERPA. Phosphoserine is present on residues serine 214 and serine 219. The short motif at 295 to 323 is the Q motif element; the sequence is TSFDDVQLTEIIRNNVALARYDKPTPVQK. ATP-binding positions include 315–322 and 339–346; these read YDKPTPVQ and AQTGSGKT. One can recognise a Helicase ATP-binding domain in the interval 326 to 515; that stretch reads IPIIINGRDL…SDFLSNYIFL (190 aa). Residues 459-462 carry the DEAD box motif; it reads DEAD. Residues 542-693 enclose the Helicase C-terminal domain; that stretch reads YLLDLLSSIR…EIPSFMEDMS (152 aa). Serine 638 carries the phosphoserine modification. Disordered stretches follow at residues 689-765 and 778-798; these read MEDM…SGGG and GGSY…WWAQ. Composition is skewed to gly residues over residues 706–717 and 740–750; these read RGGGGRYGGGFG and GGSGSGGGGGS.

It belongs to the DEAD box helicase family. DDX3/DED1 subfamily. In terms of tissue distribution, vas and bel colocalize in nuage (perinuclear, electron-dense granules in germline cells) and at the oocyte posterior during oogenesis.

It is found in the cytoplasm. The catalysed reaction is ATP + H2O = ADP + phosphate + H(+). In terms of biological role, ATP-dependent RNA helicase that is essential and required for cellular function, larval growth, and for male and female fertility. Also required for RNA interference (RNAi), double-stranded RNA induces potent and specific gene silencing, by acting downstream of dsRNA internalization. RNAi is mediated by the RNA-induced silencing complex (RISC), a sequence-specific, multicomponent nuclease that destroys or silences messenger RNAs homologous to the silencing trigger. The sequence is that of ATP-dependent RNA helicase bel from Drosophila melanogaster (Fruit fly).